We begin with the raw amino-acid sequence, 241 residues long: Acetoacetyl-CoA reductase (241 aa).

NADP(+) contacts are provided by residues 12–14 (RGI) and 82–86 (NAGIT). Residues D88 and 141–144 (QMGQ) contribute to the substrate site. Y147 acts as the Proton acceptor in catalysis. 177–180 (PGYI) is an NADP(+) binding site. 178 to 179 (GY) provides a ligand contact to substrate.

This sequence belongs to the short-chain dehydrogenases/reductases (SDR) family.

The protein resides in the cytoplasm. The catalysed reaction is a (3R)-3-hydroxyacyl-CoA + NADP(+) = a 3-oxoacyl-CoA + NADPH + H(+). It participates in biopolymer metabolism; poly-(R)-3-hydroxybutanoate biosynthesis. The chain is Acetoacetyl-CoA reductase from Shinella zoogloeoides (Crabtreella saccharophila).